The chain runs to 117 residues: Eukaryotic translation initiation factor 4E-binding protein (117 aa).

Phosphothreonine is present on residues threonine 37 and threonine 46. Residues 54–60 (YERAFMK) carry the YXXXXLphi motif; atypical motif. Residue serine 65 is modified to Phosphoserine. Threonine 70 bears the Phosphothreonine mark.

It belongs to the eIF4E-binding protein family. Hypophosphorylated Thor/4E-BP competes with eIF4G1 to interact with eIF4E1; insulin stimulated Akt1 or Tor phosphorylation of Thor/4E-BP causes dissociation of the complex allowing eIF4G1 to bind and consequent initiation of translation. Post-translationally, phosphorylation at Thr-37, Thr-46, Ser-65 and Thr-70, corresponding to the hyperphosphorylated form, impairs its ability to prevent the interaction between eIF4G1 and eIF4E1, without affecting its interaction with free eIF4E1. Phosphorylated in rtesponse to insulin. Phosphorylation at Thr-46 is regulated by Tor and constitutes the major phosphorylation event that regulates activity. In terms of tissue distribution, widely expressed.

Its function is as follows. Repressor of translation initiation that regulates eIF4E1 activity by preventing its assembly into the eIF4F complex. Hypophosphorylated form competes with eIF4G1 and strongly binds to eIF4E1, leading to repress translation. In contrast, hyperphosphorylated form dissociates from eIF4E1, allowing interaction between eIF4G1 and eIF4E1, leading to initiation of translation. Acts as a regulator of various biological processes, such as innate immunity, cell growth or synaptic transmission. Acts downstream of phosphoinositide-3-kinase (PI3K) to regulate cell growth. Extends lifespan upon dietary restriction by regulating the mitochondrial translation. Acts as a regulator of lifespan in response to cold by regulating the mitochondrial translation. Acts as a negative regulator of presynaptic release of neurotransmitter in motor neurons: Thor expression is induced in response to insulin signaling, leading to prevent of translation of complexin (cpx), a protein known to regulate the exocytosis of synaptic vesicles. Acts as a negative regulator of synaptic strength at the neuromuscular junction: Thor expression in response to acute fasting prevents translation, thereby suppressing retrograde synaptic enhancement. The sequence is that of Eukaryotic translation initiation factor 4E-binding protein from Drosophila melanogaster (Fruit fly).